We begin with the raw amino-acid sequence, 160 residues long: SsrA-binding protein (160 aa).

The disordered stretch occupies residues 1–23 (MARKKKQDKGQGPKTIAQNRRAR).

The protein belongs to the SmpB family.

The protein localises to the cytoplasm. Its function is as follows. Required for rescue of stalled ribosomes mediated by trans-translation. Binds to transfer-messenger RNA (tmRNA), required for stable association of tmRNA with ribosomes. tmRNA and SmpB together mimic tRNA shape, replacing the anticodon stem-loop with SmpB. tmRNA is encoded by the ssrA gene; the 2 termini fold to resemble tRNA(Ala) and it encodes a 'tag peptide', a short internal open reading frame. During trans-translation Ala-aminoacylated tmRNA acts like a tRNA, entering the A-site of stalled ribosomes, displacing the stalled mRNA. The ribosome then switches to translate the ORF on the tmRNA; the nascent peptide is terminated with the 'tag peptide' encoded by the tmRNA and targeted for degradation. The ribosome is freed to recommence translation, which seems to be the essential function of trans-translation. In Thermobifida fusca (strain YX), this protein is SsrA-binding protein.